Here is a 424-residue protein sequence, read N- to C-terminus: UDP-N-acetylglucosamine 1-carboxyvinyltransferase (424 aa).

Residue 22 to 23 (KN) participates in phosphoenolpyruvate binding. Arginine 93 contributes to the UDP-N-acetyl-alpha-D-glucosamine binding site. Residue cysteine 117 is the Proton donor of the active site. Position 117 is a 2-(S-cysteinyl)pyruvic acid O-phosphothioketal (cysteine 117). UDP-N-acetyl-alpha-D-glucosamine is bound by residues 122 to 126 (RPIDL), aspartate 307, and valine 329.

This sequence belongs to the EPSP synthase family. MurA subfamily.

The protein resides in the cytoplasm. The enzyme catalyses phosphoenolpyruvate + UDP-N-acetyl-alpha-D-glucosamine = UDP-N-acetyl-3-O-(1-carboxyvinyl)-alpha-D-glucosamine + phosphate. It participates in cell wall biogenesis; peptidoglycan biosynthesis. In terms of biological role, cell wall formation. Adds enolpyruvyl to UDP-N-acetylglucosamine. This Chlorobium limicola (strain DSM 245 / NBRC 103803 / 6330) protein is UDP-N-acetylglucosamine 1-carboxyvinyltransferase.